The sequence spans 131 residues: Small ribosomal subunit protein bS6 (131 aa).

The segment at 98 to 131 (EASPMVKAKDERRERREDFANETADDSEAGDSEE) is disordered. The span at 104-116 (KAKDERRERREDF) shows a compositional bias: basic and acidic residues. Over residues 120–131 (TADDSEAGDSEE) the composition is skewed to acidic residues.

The protein belongs to the bacterial ribosomal protein bS6 family.

In terms of biological role, binds together with bS18 to 16S ribosomal RNA. The sequence is that of Small ribosomal subunit protein bS6 from Klebsiella pneumoniae subsp. pneumoniae (strain ATCC 700721 / MGH 78578).